Consider the following 238-residue polypeptide: ATP synthase subunit a, chloroplastic (238 aa).

Helical transmembrane passes span 27–47 (GQVLITSWVVLGILAVLSFLG), 86–106 (VPFLGTIFLFIFVSNWSGALL), 125–145 (INTTVALALLTSISYFYAGIS), 190–210 (LVVGVLVALVPLIIPIPIMLL), and 211–231 (GVFTSAIQALVFATLAGAYIN).

Belongs to the ATPase A chain family. In terms of assembly, F-type ATPases have 2 components, F(1) - the catalytic core - and F(0) - the membrane proton channel. F(1) has five subunits: alpha(3), beta(3), gamma(1), delta(1), epsilon(1). F(0) has four main subunits: a(1), b(1), b'(1) and c(10-14). The alpha and beta chains form an alternating ring which encloses part of the gamma chain. F(1) is attached to F(0) by a central stalk formed by the gamma and epsilon chains, while a peripheral stalk is formed by the delta, b and b' chains.

It localises to the plastid. Its subcellular location is the chloroplast thylakoid membrane. Its function is as follows. F(1)F(0) ATP synthase produces ATP from ADP in the presence of a proton or sodium gradient. F-type ATPases consist of two structural domains, F(1) containing the extramembraneous catalytic core and F(0) containing the membrane proton channel, linked together by a central stalk and a peripheral stalk. During catalysis, ATP synthesis in the catalytic domain of F(1) is coupled via a rotary mechanism of the central stalk subunits to proton translocation. This Chlamydomonas reinhardtii (Chlamydomonas smithii) protein is ATP synthase subunit a, chloroplastic.